Reading from the N-terminus, the 372-residue chain is Glutamate 5-kinase (372 aa).

Lysine 14 contacts ATP. Serine 54, aspartate 141, and asparagine 153 together coordinate substrate. ATP is bound by residues 173–174 (TD) and 215–221 (TGGMATK). A PUA domain is found at 280-358 (RGQLVIDAGA…DSIEEVLGYD (79 aa)).

It belongs to the glutamate 5-kinase family.

It is found in the cytoplasm. The catalysed reaction is L-glutamate + ATP = L-glutamyl 5-phosphate + ADP. Its pathway is amino-acid biosynthesis; L-proline biosynthesis; L-glutamate 5-semialdehyde from L-glutamate: step 1/2. In terms of biological role, catalyzes the transfer of a phosphate group to glutamate to form L-glutamate 5-phosphate. The chain is Glutamate 5-kinase from Shewanella pealeana (strain ATCC 700345 / ANG-SQ1).